A 59-amino-acid polypeptide reads, in one-letter code: Large ribosomal subunit protein uL30 (59 aa).

This sequence belongs to the universal ribosomal protein uL30 family. Part of the 50S ribosomal subunit.

This Leptospira interrogans serogroup Icterohaemorrhagiae serovar copenhageni (strain Fiocruz L1-130) protein is Large ribosomal subunit protein uL30.